A 289-amino-acid polypeptide reads, in one-letter code: BTB/POZ domain-containing protein KCTD7 (289 aa).

Residues 1–42 (MVVVTGREPDSRHSDGAMSSSEAEDDFLEPATPTATQAGHGL) form a disordered region. A BTB domain is found at 53-141 (VPLNIGGAHF…YAIGPLLEQL (89 aa)).

As to quaternary structure, interacts with CUL3. High expression in brain, particularly in post-mitotic neurons. Expressed in the mitral cells of the olfactory bulbs, the hippocampus, the deep layers of the cerebral cortex and Purkinje cells of the cerebellum. Not detected in astrocytes or microglial cells. Also expressed in heart, liver, spleen and kidney.

It is found in the cell membrane. It localises to the cytoplasm. Its subcellular location is the cytosol. Functionally, may be involved in the control of excitability of cortical neurons. The sequence is that of BTB/POZ domain-containing protein KCTD7 (Kctd7) from Mus musculus (Mouse).